A 562-amino-acid polypeptide reads, in one-letter code: Phosphoglucomutase-1 (562 aa).

Met-1 bears the N-acetylmethionine mark. Lys-16 is subject to N6-acetyllysine. Arg-23 is an alpha-D-glucose 1,6-bisphosphate binding site. Thr-115 is subject to Phosphothreonine. Ser-117 contacts alpha-D-glucose 1,6-bisphosphate. The active-site Phosphoserine intermediate is Ser-117. Position 117 (Ser-117) interacts with Mg(2+). A phosphoserine mark is found at Ser-117 and Ser-134. Residue Thr-185 is modified to Phosphothreonine. Phosphoserine occurs at positions 206 and 213. 3 residues coordinate Mg(2+): Asp-288, Asp-290, and Asp-292. 2 residues coordinate alpha-D-glucose 1,6-bisphosphate: Asp-292 and Arg-293. At Lys-349 the chain carries N6-acetyllysine. Tyr-353 is subject to Phosphotyrosine. Thr-357 provides a ligand contact to alpha-D-glucose 1,6-bisphosphate. Residue Ser-369 is modified to Phosphoserine. The alpha-D-glucose 1,6-bisphosphate site is built by Glu-376, Ser-378, and Lys-389. Ser-378 carries the post-translational modification Phosphoserine. Position 419 is an N6-succinyllysine (Lys-419). The residue at position 467 (Thr-467) is a Phosphothreonine; by PAK1. Ser-477, Ser-485, and Ser-505 each carry phosphoserine. Thr-507 is subject to Phosphothreonine. Residues Ser-509 and Ser-541 each carry the phosphoserine modification.

Belongs to the phosphohexose mutase family. As to quaternary structure, monomer. The cofactor is Mg(2+). Post-translationally, phosphorylation at Thr-467 by PAK1 significantly enhances enzymatic activity.

It localises to the cytoplasm. It catalyses the reaction alpha-D-glucose 1-phosphate = alpha-D-glucose 6-phosphate. The enzyme catalyses O-phospho-L-seryl-[protein] + alpha-D-glucose 1-phosphate = alpha-D-glucose 1,6-bisphosphate + L-seryl-[protein]. The catalysed reaction is alpha-D-glucose 1,6-bisphosphate + L-seryl-[protein] = O-phospho-L-seryl-[protein] + alpha-D-glucose 6-phosphate. Functionally, catalyzes the reversible isomerization of alpha-D-glucose 1-phosphate to alpha-D-glucose 6-phosphate. The mechanism proceeds via the intermediate compound alpha-D-glucose 1,6-bisphosphate. This enzyme participates in both the breakdown and synthesis of glucose. This is Phosphoglucomutase-1 (PGM1) from Macaca fascicularis (Crab-eating macaque).